A 428-amino-acid polypeptide reads, in one-letter code: Chaperone SurA (428 aa).

The signal sequence occupies residues 1 to 13 (MLGALLLSGAVHA). 2 consecutive PpiC domains span residues 164-265 (SEEF…KLLE) and 276-375 (RDEV…EVLG).

It localises to the periplasm. The catalysed reaction is [protein]-peptidylproline (omega=180) = [protein]-peptidylproline (omega=0). Chaperone involved in the correct folding and assembly of outer membrane proteins. Recognizes specific patterns of aromatic residues and the orientation of their side chains, which are found more frequently in integral outer membrane proteins. May act in both early periplasmic and late outer membrane-associated steps of protein maturation. The chain is Chaperone SurA from Pseudomonas savastanoi pv. phaseolicola (strain 1448A / Race 6) (Pseudomonas syringae pv. phaseolicola (strain 1448A / Race 6)).